Consider the following 305-residue polypeptide: tRNA pseudouridine synthase B (305 aa).

Residue D48 is the Nucleophile of the active site.

It belongs to the pseudouridine synthase TruB family. Type 1 subfamily.

The enzyme catalyses uridine(55) in tRNA = pseudouridine(55) in tRNA. Responsible for synthesis of pseudouridine from uracil-55 in the psi GC loop of transfer RNAs. The sequence is that of tRNA pseudouridine synthase B from Stutzerimonas stutzeri (strain A1501) (Pseudomonas stutzeri).